Consider the following 599-residue polypeptide: uncharacterized protein (599 aa).

This is an uncharacterized protein from Acanthamoeba polyphaga (Amoeba).